The chain runs to 192 residues: uncharacterized protein (192 aa).

The Nudix hydrolase domain maps to 29 to 160 (HRQAAVLIPI…PLDIYRRGDS (132 aa)). A Nudix box motif is present at residues 67 to 89 (GAVDDTDTSVIAAALREAEEEVA). The Mg(2+) site is built by glutamate 83 and glutamate 87.

This sequence belongs to the Nudix hydrolase family. PCD1 subfamily. The cofactor is Mn(2+). Mg(2+) is required as a cofactor.

In terms of biological role, probably mediates the hydrolysis of some nucleoside diphosphate derivatives. This is an uncharacterized protein from Escherichia fergusonii (strain ATCC 35469 / DSM 13698 / CCUG 18766 / IAM 14443 / JCM 21226 / LMG 7866 / NBRC 102419 / NCTC 12128 / CDC 0568-73).